A 199-amino-acid polypeptide reads, in one-letter code: Peroxynitrite isomerase (199 aa).

A GXWXGXG motif is present at residues 21 to 27 (GEWEGRG). A heme b-binding site is contributed by H190.

This sequence belongs to the nitrobindin family. In terms of assembly, homodimer. Heme b is required as a cofactor.

It carries out the reaction peroxynitrite = nitrate. The protein operates within nitrogen metabolism. Heme-binding protein able to scavenge peroxynitrite and to protect free L-tyrosine against peroxynitrite-mediated nitration, by acting as a peroxynitrite isomerase that converts peroxynitrite to nitrate. Therefore, this protein likely plays a role in peroxynitrite sensing and in the detoxification of reactive nitrogen and oxygen species (RNS and ROS, respectively). Is able to bind nitric oxide (NO) in vitro, but may act as a sensor of peroxynitrite levels in vivo. This is Peroxynitrite isomerase from Paenarthrobacter aurescens (strain TC1).